We begin with the raw amino-acid sequence, 211 residues long: Prolactin-3C1 (211 aa).

The N-terminal stretch at 1–29 is a signal peptide; sequence MQLSLTQARTWKGLLLLVSCMILWISVTP. 2 N-linked (GlcNAc...) asparagine glycosylation sites follow: Asn77 and Asn173. Cys80 and Cys187 are oxidised to a cystine.

This sequence belongs to the somatotropin/prolactin family. Expressed exclusively in decidual tissue.

Its subcellular location is the secreted. This is Prolactin-3C1 (Prl3c1) from Rattus norvegicus (Rat).